Here is a 146-residue protein sequence, read N- to C-terminus: Universal stress protein MTH_1154 (146 aa).

It belongs to the universal stress protein A family.

The chain is Universal stress protein MTH_1154 from Methanothermobacter thermautotrophicus (strain ATCC 29096 / DSM 1053 / JCM 10044 / NBRC 100330 / Delta H) (Methanobacterium thermoautotrophicum).